The sequence spans 1384 residues: DNA-directed RNA polymerase subunit beta (1384 aa).

It belongs to the RNA polymerase beta chain family. In terms of assembly, the RNAP catalytic core consists of 2 alpha, 1 beta, 1 beta' and 1 omega subunit. When a sigma factor is associated with the core the holoenzyme is formed, which can initiate transcription.

The catalysed reaction is RNA(n) + a ribonucleoside 5'-triphosphate = RNA(n+1) + diphosphate. Its function is as follows. DNA-dependent RNA polymerase catalyzes the transcription of DNA into RNA using the four ribonucleoside triphosphates as substrates. This is DNA-directed RNA polymerase subunit beta from Xylella fastidiosa (strain M23).